Reading from the N-terminus, the 133-residue chain is Cytidine deaminase (133 aa).

Positions 4-126 (VDWNMLRGNA…DLLPDAFGLD (123 aa)) constitute a CMP/dCMP-type deaminase domain. Residue 45-47 (NVE) participates in substrate binding. Cys-56 contributes to the Zn(2+) binding site. Glu-58 acts as the Proton donor in catalysis. Cys-89 and Cys-92 together coordinate Zn(2+).

It belongs to the cytidine and deoxycytidylate deaminase family. As to quaternary structure, homotetramer. It depends on Zn(2+) as a cofactor.

The catalysed reaction is cytidine + H2O + H(+) = uridine + NH4(+). It catalyses the reaction 2'-deoxycytidine + H2O + H(+) = 2'-deoxyuridine + NH4(+). Recycles cytidine and 2-deoxycytidine for uridine and 2-deoxyuridine synthesis, respectively. Catalyzes the hydrolytic deamination of cytidine and 2-deoxycytidine to form, respectively, uridine and 2-deoxyuridine. The polypeptide is Cytidine deaminase (cdd) (Mycobacterium tuberculosis (strain CDC 1551 / Oshkosh)).